A 475-amino-acid chain; its full sequence is Lactate utilization protein B (475 aa).

4Fe-4S ferredoxin-type domains are found at residues 304 to 334 and 353 to 382; these read GTEFQPVLQCIRCAACVNVCPVYRHIGGHSY and YDDYKELPYASSLCAACTEACPVKIPLHEL. Cysteine 313, cysteine 316, cysteine 319, cysteine 323, cysteine 366, cysteine 369, and cysteine 373 together coordinate [4Fe-4S] cluster.

It belongs to the LutB/YkgF family.

Is involved in L-lactate degradation and allows cells to grow with lactate as the sole carbon source. Has probably a role as an electron transporter during oxidation of L-lactate. This Geobacillus sp. (strain WCH70) protein is Lactate utilization protein B.